Here is a 121-residue protein sequence, read N- to C-terminus: Small ribosomal subunit protein uS13 (121 aa).

A disordered region spans residues 92 to 121; sequence RRGLPVRGQKTKNNSRTRKGPRKTMANKKK.

The protein belongs to the universal ribosomal protein uS13 family. Part of the 30S ribosomal subunit. Forms a loose heterodimer with protein S19. Forms two bridges to the 50S subunit in the 70S ribosome.

Its function is as follows. Located at the top of the head of the 30S subunit, it contacts several helices of the 16S rRNA. In the 70S ribosome it contacts the 23S rRNA (bridge B1a) and protein L5 of the 50S subunit (bridge B1b), connecting the 2 subunits; these bridges are implicated in subunit movement. Contacts the tRNAs in the A and P-sites. This chain is Small ribosomal subunit protein uS13, found in Oceanobacillus iheyensis (strain DSM 14371 / CIP 107618 / JCM 11309 / KCTC 3954 / HTE831).